Reading from the N-terminus, the 289-residue chain is ATP synthase subunit a (289 aa).

Transmembrane regions (helical) follow at residues 43-63 (AFHVDTLGWSVALGLIFVLIF), 101-121 (SAVIAPLALTIFVWVFLMNAV), 160-180 (LSVFALIIFYSIKVKGIGGFI), 193-213 (IFVQALLIPVNFLLEFVTLIA), 232-252 (VFILIAVMFGSGLLWLSGLGI), and 259-279 (AVFHILIITLQAFIFMMLTIV).

It belongs to the ATPase A chain family. In terms of assembly, F-type ATPases have 2 components, CF(1) - the catalytic core - and CF(0) - the membrane proton channel. CF(1) has five subunits: alpha(3), beta(3), gamma(1), delta(1), epsilon(1). CF(0) has three main subunits: a(1), b(2) and c(9-12). The alpha and beta chains form an alternating ring which encloses part of the gamma chain. CF(1) is attached to CF(0) by a central stalk formed by the gamma and epsilon chains, while a peripheral stalk is formed by the delta and b chains.

It is found in the cell inner membrane. In terms of biological role, key component of the proton channel; it plays a direct role in the translocation of protons across the membrane. In Pseudomonas syringae pv. tomato (strain ATCC BAA-871 / DC3000), this protein is ATP synthase subunit a.